A 701-amino-acid polypeptide reads, in one-letter code: Arachidonate 12-lipoxygenase, 12R-type (701 aa).

The 118-residue stretch at 2-119 (ATYKVKVATG…TLSLREATGK (118 aa)) folds into the PLAT domain. The region spanning 120 to 701 (TTADDTLPIL…PVLIENSISI (582 aa)) is the Lipoxygenase domain. Residues H398, H403, H578, N582, and I701 each contribute to the Fe cation site.

Belongs to the lipoxygenase family. The cofactor is Fe cation.

It is found in the cytoplasm. Its subcellular location is the perinuclear region. It catalyses the reaction (5Z,8Z,11Z,14Z)-eicosatetraenoate + O2 = (12R)-hydroperoxy-(5Z,8Z,10E,14Z)-eicosatetraenoate. The enzyme catalyses N-[omega-(9Z,12Z)-octadecadienoyloxy]acyl-beta-D-glucosyl-(1&lt;-&gt;1)-octadecasphing-4E-enine + O2 = N-[omega-(9R)-hydroperoxy-(10E,12Z)-octadecadienoyloxy]acyl-beta-D-glucosyl-(1&lt;-&gt;1)-octadecasphing-4E-enine. It carries out the reaction a N-[omega-(9Z,12Z)-octadecadienoyloxy]-acylsphin-4E-enine + O2 = a N-[omega-(9R)-hydroperoxy-(10E,12Z)-octadecadienoyloxy]-acylsphin-4E-enine. The catalysed reaction is (6Z,9Z,12Z)-octadecatrienoate + O2 = 10-hydroperoxy-(6Z,8E,12Z)-octadecatrienoate. It catalyses the reaction (4Z,7Z,10Z,13Z,16Z,19Z)-docosahexaenoate + O2 = 14-hydroperoxy-(4Z,7Z,10Z,12E,16Z,19Z)-docosahexaenoate. The enzyme catalyses (8Z,11Z,14Z)-eicosatrienoate + O2 = (8Z,10E,14Z)-12-hydroperoxyeicosatrienoate. It carries out the reaction (5Z,8Z,11Z,14Z,17Z)-eicosapentaenoate + O2 = (5Z,7Z,8Z,10E,14Z,17Z)-12-hydroperoxyeicosapentaenoate. The catalysed reaction is (6Z,9Z,12Z)-octadecatrienoate + O2 = 10R-hydroperoxy-(6Z,8E,12Z)-octadecatrienoate. It catalyses the reaction 1-O-methyl-(5Z,8Z,11Z,14Z)-eicosatetraenoate + O2 = 1-O-methyl (5Z,8Z,10E,12R,14Z)-hydroperoxyiecosatetraenoate. The enzyme catalyses 1-O-methyl-(5Z,8Z,11Z,14Z)-eicosatetraenoate + O2 = 1-O-methyl-8-hydroperoxy-(5Z,9E,11Z,14Z)-eicosatetraenoate. It carries out the reaction 1-O-methyl-(5Z,8Z,11Z,14Z)-eicosatetraenoate + O2 = 1-O-methyl-(8R)-hydroperoxy-(5Z,9E,11Z,14Z)-eicosatrienoate. The catalysed reaction is 1-O-methyl-(9Z,12Z)-octadecadienoate + O2 = 1-O-methyl-(9R)-hydroperoxy-(10E,12Z)-octadecadienoate. It catalyses the reaction 1-O-methyl-20-hydroxy-(5Z,8Z,11Z,14Z)-eicosatetraenoate + O2 = 1-O-methyl-8-hydroperoxy-20-hydroxy-(5Z,9E,11Z,14Z)-eicosatetraenoate. The enzyme catalyses 1-O-methyl-20-hydroxy-(5Z,8Z,11Z,14Z)-eicosatetraenoate + O2 = 1-O-methyl-12-hydroperoxy-20-hydroxy-(5Z,8Z,10E,14Z)-eicosatetraenoate. It carries out the reaction 1-O-methyl-20-hydroxy-(5Z,8Z,11Z,14Z)-eicosatetraenoate + O2 = 1-O-methyl-9-hydroperoxy-20-hydroxy-(5Z,7E,11Z,14Z)-eicosatetraenoate. The catalysed reaction is 1-O-methyl-(9Z,12Z)-octadecadienoate + O2 = 1-O-methyl-(13S)-hydroperoxy-(9Z,11E)-octadecadienoate. It functions in the pathway lipid metabolism; hydroperoxy eicosatetraenoic acid biosynthesis. The protein operates within lipid metabolism; sphingolipid metabolism. With respect to regulation, increased by calcium. Catalyzes the regio and stereo-specific incorporation of a single molecule of dioxygen into free and esterified polyunsaturated fatty acids generating lipid hydroperoxides that can be further reduced to the corresponding hydroxy species. In the skin, acts upstream of ALOXE3 on the lineolate moiety of esterified omega-hydroxyacyl-sphingosine (EOS) ceramides to produce an epoxy-ketone derivative, a crucial step in the conjugation of omega-hydroxyceramide to membrane proteins. Therefore plays a crucial role in the synthesis of corneocytes lipid envelope and the establishment of the skin barrier to water loss. May also play a role in the regulation of the expression of airway mucins. The chain is Arachidonate 12-lipoxygenase, 12R-type from Rattus norvegicus (Rat).